The chain runs to 267 residues: Indole-3-glycerol phosphate synthase (267 aa).

This sequence belongs to the TrpC family.

The enzyme catalyses 1-(2-carboxyphenylamino)-1-deoxy-D-ribulose 5-phosphate + H(+) = (1S,2R)-1-C-(indol-3-yl)glycerol 3-phosphate + CO2 + H2O. It participates in amino-acid biosynthesis; L-tryptophan biosynthesis; L-tryptophan from chorismate: step 4/5. The protein is Indole-3-glycerol phosphate synthase of Cupriavidus pinatubonensis (strain JMP 134 / LMG 1197) (Cupriavidus necator (strain JMP 134)).